A 125-amino-acid chain; its full sequence is UPF0102 protein PBPRA3228 (125 aa).

This sequence belongs to the UPF0102 family.

The chain is UPF0102 protein PBPRA3228 from Photobacterium profundum (strain SS9).